The chain runs to 418 residues: Tyrosine--tRNA ligase (418 aa).

Tyr-34 serves as a coordination point for L-tyrosine. The short motif at 39–48 is the 'HIGH' region element; sequence PTADSLHLGH. 2 residues coordinate L-tyrosine: Tyr-169 and Gln-173. Residues 229 to 233 carry the 'KMSKS' region motif; it reads KFGKS. Lys-232 contacts ATP. The region spanning 352 to 418 is the S4 RNA-binding domain; sequence LNIVDMLVTA…GKKKYAVLTY (67 aa).

The protein belongs to the class-I aminoacyl-tRNA synthetase family. TyrS type 1 subfamily. As to quaternary structure, homodimer.

The protein localises to the cytoplasm. It catalyses the reaction tRNA(Tyr) + L-tyrosine + ATP = L-tyrosyl-tRNA(Tyr) + AMP + diphosphate + H(+). Catalyzes the attachment of tyrosine to tRNA(Tyr) in a two-step reaction: tyrosine is first activated by ATP to form Tyr-AMP and then transferred to the acceptor end of tRNA(Tyr). This Streptococcus equi subsp. zooepidemicus (strain H70) protein is Tyrosine--tRNA ligase.